We begin with the raw amino-acid sequence, 809 residues long: Valine--tRNA ligase (809 aa).

The short motif at 60–70 (PFTSGELHMGH) is the 'HIGH' region element. The 'KMSKS' region signature appears at 546–550 (RMSKS). An ATP-binding site is contributed by Lys-549.

The protein belongs to the class-I aminoacyl-tRNA synthetase family. ValS type 2 subfamily.

It is found in the cytoplasm. It catalyses the reaction tRNA(Val) + L-valine + ATP = L-valyl-tRNA(Val) + AMP + diphosphate. Its function is as follows. Catalyzes the attachment of valine to tRNA(Val). As ValRS can inadvertently accommodate and process structurally similar amino acids such as threonine, to avoid such errors, it has a 'posttransfer' editing activity that hydrolyzes mischarged Thr-tRNA(Val) in a tRNA-dependent manner. In Sulfurisphaera tokodaii (strain DSM 16993 / JCM 10545 / NBRC 100140 / 7) (Sulfolobus tokodaii), this protein is Valine--tRNA ligase.